The following is a 56-amino-acid chain: Ovomucoid (56 aa).

The 51-residue stretch at 6–56 (VDCSDHPKPACLQEQKPLCGSDNKTYDNKCSFCNAVVDSNGTLTLSHFGKC) folds into the Kazal-like domain. 3 disulfides stabilise this stretch: C8/C38, C16/C35, and C24/C56. N45 carries an N-linked (GlcNAc...) asparagine glycan.

It localises to the secreted. The sequence is that of Ovomucoid from Pipile pipile (Trinidad piping guan).